Consider the following 285-residue polypeptide: Bifunctional protein FolD (285 aa).

Residues 164–166 (GAS), isoleucine 189, and isoleucine 230 contribute to the NADP(+) site.

It belongs to the tetrahydrofolate dehydrogenase/cyclohydrolase family. Homodimer.

The enzyme catalyses (6R)-5,10-methylene-5,6,7,8-tetrahydrofolate + NADP(+) = (6R)-5,10-methenyltetrahydrofolate + NADPH. The catalysed reaction is (6R)-5,10-methenyltetrahydrofolate + H2O = (6R)-10-formyltetrahydrofolate + H(+). It participates in one-carbon metabolism; tetrahydrofolate interconversion. Functionally, catalyzes the oxidation of 5,10-methylenetetrahydrofolate to 5,10-methenyltetrahydrofolate and then the hydrolysis of 5,10-methenyltetrahydrofolate to 10-formyltetrahydrofolate. The sequence is that of Bifunctional protein FolD from Sulfurimonas denitrificans (strain ATCC 33889 / DSM 1251) (Thiomicrospira denitrificans (strain ATCC 33889 / DSM 1251)).